We begin with the raw amino-acid sequence, 320 residues long: Cytochrome f (320 aa).

The N-terminal stretch at 1–35 is a signal peptide; it reads MHTKNLFYSRPQQITQYLSAFLMMVILTRTSISSA. Y36, C56, C59, and H60 together coordinate heme. The helical transmembrane segment at 286-306 threads the bilayer; it reads VQVLLFFFASIILAQIFLVLK.

This sequence belongs to the cytochrome f family. The 4 large subunits of the cytochrome b6-f complex are cytochrome b6, subunit IV (17 kDa polypeptide, petD), cytochrome f and the Rieske protein, while the 4 small subunits are PetG, PetL, PetM and PetN. The complex functions as a dimer. Heme serves as cofactor.

It is found in the plastid thylakoid membrane. In terms of biological role, component of the cytochrome b6-f complex, which mediates electron transfer between photosystem II (PSII) and photosystem I (PSI), cyclic electron flow around PSI, and state transitions. The chain is Cytochrome f from Cuscuta obtusiflora (Peruvian dodder).